A 777-amino-acid polypeptide reads, in one-letter code: Phosphate transporter PHO1 homolog 10 (777 aa).

An SPX domain is found at 1–322 (MKFGKIFKKQ…SRNASRNYMK (322 aa)). Over 1-372 (MKFGKIFKKQ…RPKVKRERHR (372 aa)) the chain is Cytoplasmic. A helical transmembrane segment spans residues 373-393 (VTFFSGFFSGCSIALVIAVVF). Over 394-408 (KIESRKIMEKNYGTE) the chain is Extracellular. Residues 409–429 (YMANIIPLYSLFGFIILHMLM) traverse the membrane as a helical segment. Residues 430-459 (YSANIYFWKRYRVNYTFIFGFKQGTELGDR) lie on the Cytoplasmic side of the membrane. The chain crosses the membrane as a helical span at residues 460–480 (EVFLVSTGLAVLAFVCFLLNL). The Extracellular portion of the chain corresponds to 481-496 (QLDMDWRMKHHKTLPE). Residues 497-517 (VIPLCLATIVLFILFCPFNII) traverse the membrane as a helical segment. Residues 518 to 646 (YRSSRFFFIR…YELKKGRTWM (129 aa)) lie on the Cytoplasmic side of the membrane. The 195-residue stretch at 581-775 (HSHGVYNAFY…HYYDDDDVDK (195 aa)) folds into the EXS domain. The helical transmembrane segment at 647–667 (ILALVSSGVATGMNTFWDIVI) threads the bilayer. The Extracellular segment spans residues 668-691 (DWGLLRKHSKNPYLRDKLLVPHKS). A helical transmembrane segment spans residues 692–712 (VYFAAMVVNVILRVAWMQLVL). At 713–777 (EFNLKSLHKI…YDDDDVDKDD (65 aa)) the chain is on the cytoplasmic side.

Belongs to the SYG1 (TC 2.A.94) family. Expressed in root epidermis and cortex, leaf blades and hydathodes, stems and flowers.

It is found in the cell membrane. Functionally, may transport inorganic phosphate (Pi). This Arabidopsis thaliana (Mouse-ear cress) protein is Phosphate transporter PHO1 homolog 10 (PHO1-H10).